Reading from the N-terminus, the 62-residue chain is LKCHNTQLPFIYKTCPEGKNLCFKATLKKFPLKFPVKRGCADNCPKNSALLKYVCCSTDKCN.

4 disulfides stabilise this stretch: C3-C22, C15-C40, C44-C55, and C56-C61.

The protein belongs to the three-finger toxin family. Short-chain subfamily. Orphan group XV sub-subfamily. In terms of tissue distribution, expressed by the venom gland.

The protein resides in the secreted. It is found in the target cell membrane. Has low cytotoxic activity. The chain is Cytotoxin-like basic protein from Naja naja (Indian cobra).